Here is a 390-residue protein sequence, read N- to C-terminus: Chorismate synthase (390 aa).

Positions 39 and 45 each coordinate NADP(+). Residues 132–134 (RSS), 253–254 (NA), Gly-298, 313–317 (KPIPT), and Arg-339 each bind FMN.

Belongs to the chorismate synthase family. Homotetramer. FMNH2 serves as cofactor.

It catalyses the reaction 5-O-(1-carboxyvinyl)-3-phosphoshikimate = chorismate + phosphate. It functions in the pathway metabolic intermediate biosynthesis; chorismate biosynthesis; chorismate from D-erythrose 4-phosphate and phosphoenolpyruvate: step 7/7. In terms of biological role, catalyzes the anti-1,4-elimination of the C-3 phosphate and the C-6 proR hydrogen from 5-enolpyruvylshikimate-3-phosphate (EPSP) to yield chorismate, which is the branch point compound that serves as the starting substrate for the three terminal pathways of aromatic amino acid biosynthesis. This reaction introduces a second double bond into the aromatic ring system. The protein is Chorismate synthase of Bacillus subtilis (strain 168).